The chain runs to 484 residues: tRNA sulfurtransferase (484 aa).

The THUMP domain maps to 63–167 (EAFAERLACI…KESLYLVSKR (105 aa)). Residues 185-186 (LI), K267, G289, and Q298 contribute to the ATP site. Cysteines 346 and 458 form a disulfide. In terms of domain architecture, Rhodanese spans 406–484 (INSGEVIIDV…GYDNVKVYRP (79 aa)). Catalysis depends on C458, which acts as the Cysteine persulfide intermediate.

This sequence belongs to the ThiI family.

The protein resides in the cytoplasm. It catalyses the reaction [ThiI sulfur-carrier protein]-S-sulfanyl-L-cysteine + a uridine in tRNA + 2 reduced [2Fe-2S]-[ferredoxin] + ATP + H(+) = [ThiI sulfur-carrier protein]-L-cysteine + a 4-thiouridine in tRNA + 2 oxidized [2Fe-2S]-[ferredoxin] + AMP + diphosphate. It carries out the reaction [ThiS sulfur-carrier protein]-C-terminal Gly-Gly-AMP + S-sulfanyl-L-cysteinyl-[cysteine desulfurase] + AH2 = [ThiS sulfur-carrier protein]-C-terminal-Gly-aminoethanethioate + L-cysteinyl-[cysteine desulfurase] + A + AMP + 2 H(+). It functions in the pathway cofactor biosynthesis; thiamine diphosphate biosynthesis. Catalyzes the ATP-dependent transfer of a sulfur to tRNA to produce 4-thiouridine in position 8 of tRNAs, which functions as a near-UV photosensor. Also catalyzes the transfer of sulfur to the sulfur carrier protein ThiS, forming ThiS-thiocarboxylate. This is a step in the synthesis of thiazole, in the thiamine biosynthesis pathway. The sulfur is donated as persulfide by IscS. This Shewanella woodyi (strain ATCC 51908 / MS32) protein is tRNA sulfurtransferase.